The chain runs to 122 residues: Large ribosomal subunit protein uL14 (122 aa).

The protein belongs to the universal ribosomal protein uL14 family. Part of the 50S ribosomal subunit. Forms a cluster with proteins L3 and L19. In the 70S ribosome, L14 and L19 interact and together make contacts with the 16S rRNA in bridges B5 and B8.

Its function is as follows. Binds to 23S rRNA. Forms part of two intersubunit bridges in the 70S ribosome. The chain is Large ribosomal subunit protein uL14 from Ralstonia nicotianae (strain ATCC BAA-1114 / GMI1000) (Ralstonia solanacearum).